We begin with the raw amino-acid sequence, 761 residues long: Zinc finger protein 711 (761 aa).

Residues K224, K235, and K296 each participate in a glycyl lysine isopeptide (Lys-Gly) (interchain with G-Cter in SUMO2) cross-link. C2H2-type zinc fingers lie at residues 383-408, 414-436, 476-499, 505-527, and 533-556; these read YPCHICTKKFKSRGFLKRHMKNHPDH, YQCTDCDFTTNKKVSFHNHLESH, HKCKYCDYETAEQGLLNRHLLAVH, HVCVECGKGFRHPSELKKHMRTH, and YQCQYCIFRCADQSNLKTHIKSKH. Positions 515-761 are required for transcriptional activation; sequence RHPSELKKHM…IMRHHKEALM (247 aa). Residues 562–584 form a C2H2-type 6; atypical zinc finger; that stretch reads YKCEHCPQAFGDERELQRHLDLF. 3 residues coordinate Zn(2+): C564, C567, and H580. C2H2-type zinc fingers lie at residues 590-613, 619-641, 647-670, 676-698, 704-727, and 733-755; these read HQCPHCDHKSTNSSDLKRHIISVH, HKCEVCDKGFHRPSELKKHSDIH, HQCRHCDFKTSDPFILSGHILSVH, LKCKRCKRGFRQQNELKKHMKTH, YQCEYCEYSTTDASGFKRHVISIH, and HRCEFCKKGFRRPSEKNQHIMRH.

The protein belongs to the krueppel C2H2-type zinc-finger protein family. Interacts with PHF8. As to expression, expressed in neural tissues.

The protein localises to the nucleus. Transcription regulator required for brain development. Probably acts as a transcription factor that binds to the promoter of target genes and recruits PHF8 histone demethylase, leading to activated expression of genes involved in neuron development, such as KDM5C. May compete with transcription factor ARX for activation of expression of KDM5C. This is Zinc finger protein 711 (ZNF711) from Homo sapiens (Human).